We begin with the raw amino-acid sequence, 463 residues long: Cytidylate cyclase (463 aa).

Residues 122–231 (VTMFMDIIGS…IGIRIGIDLG (110 aa)) form the Guanylate cyclase domain. Phenylalanine 125 is an a ribonucleoside 5'-triphosphate binding site. Residues aspartate 127, isoleucine 128, and aspartate 171 each contribute to the Mn(2+) site. Residues 334 to 454 (KPSRIKVVIS…VISNDTVIER (121 aa)) form an AGS-C domain region.

The protein belongs to the adenylyl cyclase class-4/guanylyl cyclase family. Pyrimidine cyclase subfamily. In terms of assembly, homodimer. Mn(2+) serves as cofactor.

It is found in the cytoplasm. It catalyses the reaction CTP = 3',5'-cyclic CMP + diphosphate. In terms of biological role, pycsar (pyrimidine cyclase system for antiphage resistance) provides immunity against bacteriophage. The pyrimidine cyclase (PycC) synthesizes cyclic nucleotides in response to infection; these serve as specific second messenger signals. The signal activates the adjacent effector, leading to bacterial cell death and abortive phage infection. A clade E Pycsar system. Functionally, the pyrimidine cyclase gene of a two-gene Pycsar system, generates cyclic CMP (cCMP) from CTP in response to bacteriophage infection. Has little to no activity on ATP, GTP or UTP. Expression of this and adjacent effector Ec303145PycTM (AC P0DV27) confers resistance to bacteriophage P1, T5, lambda-vir and phi27. This is Cytidylate cyclase from Escherichia coli.